Consider the following 365-residue polypeptide: Carbamoyl phosphate synthase small chain (365 aa).

CPSase stretches follow at residues 1-166 (MKRQ…PSPG) and 1-169 (MKRQ…GRGH). L-glutamine is bound by residues Ser-45, Gly-218, and Gly-220. The 188-residue stretch at 170–357 (RVVLVDFGMK…LTMIENFKKE (188 aa)) folds into the Glutamine amidotransferase type-1 domain. Residue Cys-245 is the Nucleophile of the active site. L-glutamine is bound by residues Leu-246, Gln-249, Asn-287, Gly-289, and Tyr-290. Residues His-330 and Glu-332 contribute to the active site.

Belongs to the CarA family. As to quaternary structure, composed of two chains; the small (or glutamine) chain promotes the hydrolysis of glutamine to ammonia, which is used by the large (or ammonia) chain to synthesize carbamoyl phosphate. Tetramer of heterodimers (alpha,beta)4.

It catalyses the reaction hydrogencarbonate + L-glutamine + 2 ATP + H2O = carbamoyl phosphate + L-glutamate + 2 ADP + phosphate + 2 H(+). It carries out the reaction L-glutamine + H2O = L-glutamate + NH4(+). Its pathway is amino-acid biosynthesis; L-arginine biosynthesis; carbamoyl phosphate from bicarbonate: step 1/1. It functions in the pathway pyrimidine metabolism; UMP biosynthesis via de novo pathway; (S)-dihydroorotate from bicarbonate: step 1/3. Functionally, small subunit of the glutamine-dependent carbamoyl phosphate synthetase (CPSase). CPSase catalyzes the formation of carbamoyl phosphate from the ammonia moiety of glutamine, carbonate, and phosphate donated by ATP, constituting the first step of 2 biosynthetic pathways, one leading to arginine and/or urea and the other to pyrimidine nucleotides. The small subunit (glutamine amidotransferase) binds and cleaves glutamine to supply the large subunit with the substrate ammonia. This Bacillus anthracis protein is Carbamoyl phosphate synthase small chain.